We begin with the raw amino-acid sequence, 118 residues long: NADPH-dependent 7-cyano-7-deazaguanine reductase (118 aa).

The Thioimide intermediate role is filled by cysteine 31. Aspartate 38 serves as the catalytic Proton donor. Residues 53-55 (IEL) and 72-73 (YE) each bind substrate.

Belongs to the GTP cyclohydrolase I family. QueF type 1 subfamily.

Its subcellular location is the cytoplasm. The enzyme catalyses 7-aminomethyl-7-carbaguanine + 2 NADP(+) = 7-cyano-7-deazaguanine + 2 NADPH + 3 H(+). Its pathway is tRNA modification; tRNA-queuosine biosynthesis. Its function is as follows. Catalyzes the NADPH-dependent reduction of 7-cyano-7-deazaguanine (preQ0) to 7-aminomethyl-7-deazaguanine (preQ1). This Prosthecochloris aestuarii (strain DSM 271 / SK 413) protein is NADPH-dependent 7-cyano-7-deazaguanine reductase.